A 207-amino-acid polypeptide reads, in one-letter code: Guanylate kinase (207 aa).

Residues 4–184 (GLLFIVSAPS…AVSDLYKIIR (181 aa)) enclose the Guanylate kinase-like domain. ATP is bound at residue 11 to 18 (APSGTGKS).

The protein belongs to the guanylate kinase family.

Its subcellular location is the cytoplasm. It catalyses the reaction GMP + ATP = GDP + ADP. Functionally, essential for recycling GMP and indirectly, cGMP. The polypeptide is Guanylate kinase (Buchnera aphidicola subsp. Baizongia pistaciae (strain Bp)).